A 676-amino-acid polypeptide reads, in one-letter code: tRNA 5-methylaminomethyl-2-thiouridine biosynthesis bifunctional protein MnmC (676 aa).

Residues methionine 1–asparagine 241 are tRNA (mnm(5)s(2)U34)-methyltransferase. The FAD-dependent cmnm(5)s(2)U34 oxidoreductase stretch occupies residues isoleucine 268 to lysine 676.

It in the N-terminal section; belongs to the methyltransferase superfamily. tRNA (mnm(5)s(2)U34)-methyltransferase family. The protein in the C-terminal section; belongs to the DAO family. FAD serves as cofactor.

It localises to the cytoplasm. It carries out the reaction 5-aminomethyl-2-thiouridine(34) in tRNA + S-adenosyl-L-methionine = 5-methylaminomethyl-2-thiouridine(34) in tRNA + S-adenosyl-L-homocysteine + H(+). In terms of biological role, catalyzes the last two steps in the biosynthesis of 5-methylaminomethyl-2-thiouridine (mnm(5)s(2)U) at the wobble position (U34) in tRNA. Catalyzes the FAD-dependent demodification of cmnm(5)s(2)U34 to nm(5)s(2)U34, followed by the transfer of a methyl group from S-adenosyl-L-methionine to nm(5)s(2)U34, to form mnm(5)s(2)U34. This is tRNA 5-methylaminomethyl-2-thiouridine biosynthesis bifunctional protein MnmC from Histophilus somni (strain 129Pt) (Haemophilus somnus).